Here is a 262-residue protein sequence, read N- to C-terminus: Pyridoxine 5'-phosphate synthase (262 aa).

Asparagine 6 lines the 3-amino-2-oxopropyl phosphate pocket. Residue 8–9 coordinates 1-deoxy-D-xylulose 5-phosphate; sequence DH. Arginine 17 serves as a coordination point for 3-amino-2-oxopropyl phosphate. Histidine 43 acts as the Proton acceptor in catalysis. 1-deoxy-D-xylulose 5-phosphate is bound by residues arginine 45 and histidine 50. Glutamate 70 (proton acceptor) is an active-site residue. Residue threonine 102 coordinates 1-deoxy-D-xylulose 5-phosphate. Histidine 215 acts as the Proton donor in catalysis. Residues glycine 216 and 237 to 238 each bind 3-amino-2-oxopropyl phosphate; that span reads GH.

This sequence belongs to the PNP synthase family. Homooctamer; tetramer of dimers.

Its subcellular location is the cytoplasm. The catalysed reaction is 3-amino-2-oxopropyl phosphate + 1-deoxy-D-xylulose 5-phosphate = pyridoxine 5'-phosphate + phosphate + 2 H2O + H(+). The protein operates within cofactor biosynthesis; pyridoxine 5'-phosphate biosynthesis; pyridoxine 5'-phosphate from D-erythrose 4-phosphate: step 5/5. In terms of biological role, catalyzes the complicated ring closure reaction between the two acyclic compounds 1-deoxy-D-xylulose-5-phosphate (DXP) and 3-amino-2-oxopropyl phosphate (1-amino-acetone-3-phosphate or AAP) to form pyridoxine 5'-phosphate (PNP) and inorganic phosphate. In Helicobacter pylori (strain G27), this protein is Pyridoxine 5'-phosphate synthase.